A 220-amino-acid chain; its full sequence is Deoxyribose-phosphate aldolase (220 aa).

Catalysis depends on D89, which acts as the Proton donor/acceptor. K151 functions as the Schiff-base intermediate with acetaldehyde in the catalytic mechanism. Residue K180 is the Proton donor/acceptor of the active site.

The protein belongs to the DeoC/FbaB aldolase family. DeoC type 1 subfamily.

It is found in the cytoplasm. It catalyses the reaction 2-deoxy-D-ribose 5-phosphate = D-glyceraldehyde 3-phosphate + acetaldehyde. It participates in carbohydrate degradation; 2-deoxy-D-ribose 1-phosphate degradation; D-glyceraldehyde 3-phosphate and acetaldehyde from 2-deoxy-alpha-D-ribose 1-phosphate: step 2/2. In terms of biological role, catalyzes a reversible aldol reaction between acetaldehyde and D-glyceraldehyde 3-phosphate to generate 2-deoxy-D-ribose 5-phosphate. The chain is Deoxyribose-phosphate aldolase from Streptococcus equi subsp. equi (strain 4047).